The following is a 304-amino-acid chain: MGDHIIRSLSVSGGIRILVCDVALLTREICRLHGASPTVSIALGRGLAGGALMGALLKPGQRLALKFEANGPLRKMIVEADSDGAVRASVANPTAEAEPLEGRWNVAGVLGRAGFLTVSKDLGLGGQPYQGTVQLCSSEIGDDLAYYLADSEQTPSAVGLGAALDEDGLISVCGGFLVQALPGVDEAERDRVTDNIASLPPLSSLLREGGTQKLLELLFDSVAYTRLETRELFFRCGCGREKVERALLSLGGAELWDMGTREGEARVTCEFCRQSYQFDADELKALAETATLTRIHEEHEHLQQ.

Intrachain disulfides connect Cys-236–Cys-238 and Cys-269–Cys-272.

Belongs to the HSP33 family. Under oxidizing conditions two disulfide bonds are formed involving the reactive cysteines. Under reducing conditions zinc is bound to the reactive cysteines and the protein is inactive.

The protein resides in the cytoplasm. Redox regulated molecular chaperone. Protects both thermally unfolding and oxidatively damaged proteins from irreversible aggregation. Plays an important role in the bacterial defense system toward oxidative stress. This Pelobacter propionicus (strain DSM 2379 / NBRC 103807 / OttBd1) protein is 33 kDa chaperonin.